An 80-amino-acid polypeptide reads, in one-letter code: Serine palmitoyltransferase-regulating protein TSC3 (80 aa).

The chain crosses the membrane as a helical span at residues 54 to 74 (FDSFFLHVFFLTIFSLSFFGI).

Interacts with the serine palmitoyltransferase complex LCB1-LCB2. Component of the SPOTS complex, at least composed of LCB1/2 (LCB1 and/or LCB2), ORM1/2 (ORM1 and/or ORM2), SAC1 and TSC3.

Its subcellular location is the endoplasmic reticulum membrane. Its function is as follows. Stimulates the activity of serine palmitoyltransferase (SPT), and thus plays a role in the biosynthesis of sphingolipids. The polypeptide is Serine palmitoyltransferase-regulating protein TSC3 (TSC3) (Saccharomyces cerevisiae (strain ATCC 204508 / S288c) (Baker's yeast)).